We begin with the raw amino-acid sequence, 400 residues long: ELAV-like protein 4 (400 aa).

Positions 12–48 (TMEPQVSNGPTSNTSNGPSSNSRNCPSPMQTGAATDD) are disordered. The segment covering 18-33 (SNGPTSNTSNGPSSNS) has biased composition (low complexity). The span at 34-44 (RNCPSPMQTGA) shows a compositional bias: polar residues. 3 RRM domains span residues 51–158 (TNLI…YARP), 166–246 (ANLY…FANN), and 317–395 (WCIF…FKTN).

It belongs to the RRM elav family.

The protein resides in the cytoplasm. It localises to the perikaryon. The protein localises to the cell projection. Its subcellular location is the axon. It is found in the dendrite. The protein resides in the growth cone. Functionally, RNA-binding protein that is involved in the post-transcriptional regulation of mRNAs. Plays a role in the regulation of mRNA stability, alternative splicing and translation. Binds to AU-rich element (ARE) sequences in the 3' untranslated region (3'UTR) of target mRNAs. Mainly plays a role in neuron-specific RNA processing. The protein is ELAV-like protein 4 (elavl4) of Xenopus tropicalis (Western clawed frog).